Consider the following 402-residue polypeptide: Elongation factor Tu (402 aa).

The region spanning 10–212 (KPHVNIGTIG…AVDEYIPTPE (203 aa)) is the tr-type G domain. Positions 19-26 (GHVDHGKT) are G1. Residue 19 to 26 (GHVDHGKT) coordinates GTP. Thr26 is a binding site for Mg(2+). The G2 stretch occupies residues 60–64 (GITIA). Positions 81 to 84 (DCPG) are G3. GTP contacts are provided by residues 81–85 (DCPGH) and 136–139 (NKED). A G4 region spans residues 136–139 (NKED). Positions 177–179 (SAF) are G5.

Belongs to the TRAFAC class translation factor GTPase superfamily. Classic translation factor GTPase family. EF-Tu/EF-1A subfamily. In terms of assembly, monomer.

It is found in the cytoplasm. It carries out the reaction GTP + H2O = GDP + phosphate + H(+). Functionally, GTP hydrolase that promotes the GTP-dependent binding of aminoacyl-tRNA to the A-site of ribosomes during protein biosynthesis. The protein is Elongation factor Tu of Aliarcobacter butzleri (strain RM4018) (Arcobacter butzleri).